Here is a 721-residue protein sequence, read N- to C-terminus: Catalase-peroxidase (721 aa).

Residues 89–212 (WHSAGTYRTG…LAAVQMGLIY (124 aa)) constitute a cross-link (tryptophyl-tyrosyl-methioninium (Trp-Tyr) (with M-238)). Catalysis depends on His90, which acts as the Proton acceptor. The tryptophyl-tyrosyl-methioninium (Tyr-Met) (with W-89) cross-link spans 212–238 (YVNPEGPNGDPDPFAAAVDIRETFARM). His253 contacts heme b.

The protein belongs to the peroxidase family. Peroxidase/catalase subfamily. Homodimer or homotetramer. The cofactor is heme b. Post-translationally, formation of the three residue Trp-Tyr-Met cross-link is important for the catalase, but not the peroxidase activity of the enzyme.

It carries out the reaction H2O2 + AH2 = A + 2 H2O. It catalyses the reaction 2 H2O2 = O2 + 2 H2O. Bifunctional enzyme with both catalase and broad-spectrum peroxidase activity. This is Catalase-peroxidase from Shewanella baltica (strain OS195).